Reading from the N-terminus, the 269-residue chain is Peptide deformylase 1B, chloroplastic (269 aa).

The N-terminal 51 residues, 1 to 51, are a transit peptide targeting the chloroplast; the sequence is MAARLHLRLGPRLRGFASSFAPLLAAHPRALPLSRMGSVAPLAAARARRGF. 2 residues coordinate Fe cation: C168 and H210. The active site involves E211. Fe cation is bound at residue H214.

The protein belongs to the polypeptide deformylase family. Homodimer. Requires Fe(2+) as cofactor. As to expression, mainly expressed in mature leaves and sheaths.

The protein localises to the plastid. Its subcellular location is the chloroplast stroma. It is found in the mitochondrion. The catalysed reaction is N-terminal N-formyl-L-methionyl-[peptide] + H2O = N-terminal L-methionyl-[peptide] + formate. Inhibited by actinonin. Its function is as follows. Removes the formyl group from the N-terminal Met of newly synthesized proteins. This Oryza sativa subsp. japonica (Rice) protein is Peptide deformylase 1B, chloroplastic (PDF1B).